A 305-amino-acid polypeptide reads, in one-letter code: Lipoyl synthase (305 aa).

Residues cysteine 41, cysteine 46, cysteine 52, cysteine 68, cysteine 72, cysteine 75, and serine 281 each coordinate [4Fe-4S] cluster. The region spanning 54 to 270 is the Radical SAM core domain; the sequence is GARRTATFMI…RKVAMDKGFK (217 aa). Basic and acidic residues predominate over residues 283-298; sequence HADEQVNEAAKEKQRQ. The interval 283 to 305 is disordered; the sequence is HADEQVNEAAKEKQRQGEAQLNS.

It belongs to the radical SAM superfamily. Lipoyl synthase family. Requires [4Fe-4S] cluster as cofactor.

It localises to the cytoplasm. The catalysed reaction is [[Fe-S] cluster scaffold protein carrying a second [4Fe-4S](2+) cluster] + N(6)-octanoyl-L-lysyl-[protein] + 2 oxidized [2Fe-2S]-[ferredoxin] + 2 S-adenosyl-L-methionine + 4 H(+) = [[Fe-S] cluster scaffold protein] + N(6)-[(R)-dihydrolipoyl]-L-lysyl-[protein] + 4 Fe(3+) + 2 hydrogen sulfide + 2 5'-deoxyadenosine + 2 L-methionine + 2 reduced [2Fe-2S]-[ferredoxin]. It functions in the pathway protein modification; protein lipoylation via endogenous pathway; protein N(6)-(lipoyl)lysine from octanoyl-[acyl-carrier-protein]. In terms of biological role, catalyzes the radical-mediated insertion of two sulfur atoms into the C-6 and C-8 positions of the octanoyl moiety bound to the lipoyl domains of lipoate-dependent enzymes, thereby converting the octanoylated domains into lipoylated derivatives. The polypeptide is Lipoyl synthase (Staphylococcus aureus (strain bovine RF122 / ET3-1)).